A 268-amino-acid polypeptide reads, in one-letter code: MAGREIGGGDRRWSLRGMTALVTGGTRGIGYAIVEELANFGAEVYTCSRSQNDLDECLEKWRRKGFKVSGPVCDVSSISQRQTLMESVTSSFNGKLNILINNAGTTIPKEATNFTAEDYSIIMGTNFEASYNLCQLAHPLLKASGNASIVFNSSAAGVIAVPLSSIYAASKGAINQVTKSLACEWAKDSIRVNAVAPWIINTPIIEAACQVPSQKKNIESLIGRAPMKRAGEPSEVSSLVTYLCLPTASYITGQIICVDGGYTVNGFI.

21-45 (LVTGGTRGIGYAIVEELANFGAEVY) lines the NADP(+) pocket. A substrate-binding site is contributed by Ser-154. Tyr-167 (proton acceptor) is an active-site residue.

Belongs to the short-chain dehydrogenases/reductases (SDR) family.

The polypeptide is Tropinone reductase homolog (Datura stramonium (Jimsonweed)).